The primary structure comprises 123 residues: Large ribosomal subunit protein uL24 (123 aa).

This sequence belongs to the universal ribosomal protein uL24 family. In terms of assembly, part of the 50S ribosomal subunit.

In terms of biological role, one of two assembly initiator proteins, it binds directly to the 5'-end of the 23S rRNA, where it nucleates assembly of the 50S subunit. Located at the polypeptide exit tunnel on the outside of the subunit. The chain is Large ribosomal subunit protein uL24 from Methanocella arvoryzae (strain DSM 22066 / NBRC 105507 / MRE50).